Consider the following 169-residue polypeptide: Cell division inhibitor SulA (169 aa).

A compositionally biased stretch (polar residues) spans 1-13 (MFTSAHANRSAQA). The interval 1-26 (MFTSAHANRSAQASAPAGHYAHRSGE) is disordered. Residues 106-112 (ALRTGNY) form a ftsZ binding region. The segment at 162–169 (KIHSNLYH) is lon protease binding.

This sequence belongs to the SulA family. In terms of assembly, interacts with FtsZ. In terms of processing, is rapidly cleaved and degraded by the Lon protease once DNA damage is repaired.

Component of the SOS system and an inhibitor of cell division. Accumulation of SulA causes rapid cessation of cell division and the appearance of long, non-septate filaments. In the presence of GTP, binds a polymerization-competent form of FtsZ in a 1:1 ratio, thus inhibiting FtsZ polymerization and therefore preventing it from participating in the assembly of the Z ring. This mechanism prevents the premature segregation of damaged DNA to daughter cells during cell division. This Klebsiella pneumoniae subsp. pneumoniae (strain ATCC 700721 / MGH 78578) protein is Cell division inhibitor SulA.